We begin with the raw amino-acid sequence, 760 residues long: NAD(P)H-quinone oxidoreductase subunit 5, chloroplastic (760 aa).

Helical transmembrane passes span 9–29 (WIIS…LLLF), 39–59 (IWAF…TDLF), 89–109 (IDPL…LVLV), 125–145 (FVYM…SNLI), 147–167 (IYIF…FWFT), 185–205 (GDFG…SFEF), 221–241 (NEVH…GAIA), 260–280 (TPIS…FLVA), 282–302 (LLPL…IGII), 329–349 (LGYT…FHLI), 356–376 (ALLF…VGYS), 398–418 (IAFL…CFWS), 429–449 (YSPI…FYMF), 556–576 (ILFP…IGIP), 620–640 (FSVS…KPIY), and 734–754 (FYLL…SSIF).

This sequence belongs to the complex I subunit 5 family. NDH is composed of at least 16 different subunits, 5 of which are encoded in the nucleus.

The protein resides in the plastid. It localises to the chloroplast thylakoid membrane. The catalysed reaction is a plastoquinone + NADH + (n+1) H(+)(in) = a plastoquinol + NAD(+) + n H(+)(out). It catalyses the reaction a plastoquinone + NADPH + (n+1) H(+)(in) = a plastoquinol + NADP(+) + n H(+)(out). Functionally, NDH shuttles electrons from NAD(P)H:plastoquinone, via FMN and iron-sulfur (Fe-S) centers, to quinones in the photosynthetic chain and possibly in a chloroplast respiratory chain. The immediate electron acceptor for the enzyme in this species is believed to be plastoquinone. Couples the redox reaction to proton translocation, and thus conserves the redox energy in a proton gradient. This chain is NAD(P)H-quinone oxidoreductase subunit 5, chloroplastic (ndhF), found in Populus alba (White poplar).